We begin with the raw amino-acid sequence, 467 residues long: Sexual differentiation process putative subtilase-type proteinase isp6 (467 aa).

In terms of domain architecture, Inhibitor I9 spans 86-176 (YIIVLQPDLS…AVERDQVVSI (91 aa)). Residues 186–467 (PWGLARISHK…NLLAFNGAQE (282 aa)) enclose the Peptidase S8 domain. Catalysis depends on charge relay system residues Asp-221, His-253, and Ser-409.

Belongs to the peptidase S8 family.

The chain is Sexual differentiation process putative subtilase-type proteinase isp6 (isp6) from Schizosaccharomyces pombe (strain 972 / ATCC 24843) (Fission yeast).